The chain runs to 548 residues: MFCFQCQETAKNQGCTVKGVCGKPEETADLQDLLIYVCKGIAIYGEALNAAGTLDREAAHFICRALFTTITNVAWDDDVLVDRIKEGLAVRDAVKAKAGEAVSGSLPDCATWASEDKAAIMAKALSDEVRITTMANEDVRSLRELLILGCKGVAAYTDHAAILGYEKDDIYAFLMEALASTTKELSVDDMIGLVMKAGETAVAAMALLDEANTATYGHPEITEVNIGVGKNPGILISGHDLKDMEELLRQTEGTGVDVYTHGEMLPANYYPAFKKYSHFIGNYGGSWWHQNKDFESFNGAILLTTNCLIPIKGDNTYKDRLFTTGVVNYPGAAHIGDRPDGGAKDFSPIIERAKTCAPPTEIETGTIVGGFAHHQVLALADKVVDAVKSGAIKRFVVMAGCDGRMKSRSYFTEVAEALPKDTVILTAGCAKYRYNKLNLGDIGGIPRVLDAGQCNDSYSLAVIALKLKEVFGLADINDLPISYDIAWYEQKAVAVLLALLFLGVKGIRLGPTLPAFLSPTVAGVLVDKFDIKPIGTVADDVAAMMAGK.

The [4Fe-4S] cluster site is built by Cys-3, Cys-6, Cys-15, and Cys-21. Hybrid [4Fe-2O-2S] cluster is bound by residues His-239, Glu-263, Cys-307, Cys-401, Cys-429, Cys-454, Glu-489, and Lys-491. Cysteine persulfide is present on Cys-401.

The protein belongs to the HCP family. Requires [4Fe-4S] cluster as cofactor. It depends on hybrid [4Fe-2O-2S] cluster as a cofactor.

It localises to the cytoplasm. The catalysed reaction is A + NH4(+) + H2O = hydroxylamine + AH2 + H(+). In terms of biological role, catalyzes the reduction of hydroxylamine to form NH(3) and H(2)O. This is Hydroxylamine reductase from Desulfosudis oleivorans (strain DSM 6200 / JCM 39069 / Hxd3) (Desulfococcus oleovorans).